Here is a 431-residue protein sequence, read N- to C-terminus: Tol-Pal system protein TolB (431 aa).

The signal sequence occupies residues 1 to 26 (MSLMTKLGFRALVASCLITAGSAANA). The tract at residues 406 to 431 (DGSAPPQILSVQGGSVREPSWGPFMQ) is disordered.

The protein belongs to the TolB family. The Tol-Pal system is composed of five core proteins: the inner membrane proteins TolA, TolQ and TolR, the periplasmic protein TolB and the outer membrane protein Pal. They form a network linking the inner and outer membranes and the peptidoglycan layer.

It localises to the periplasm. In terms of biological role, part of the Tol-Pal system, which plays a role in outer membrane invagination during cell division and is important for maintaining outer membrane integrity. This chain is Tol-Pal system protein TolB, found in Burkholderia orbicola (strain MC0-3).